Here is a 256-residue protein sequence, read N- to C-terminus: Imidazole glycerol phosphate synthase subunit HisF (256 aa).

Residues aspartate 12 and aspartate 131 contribute to the active site.

The protein belongs to the HisA/HisF family. As to quaternary structure, heterodimer of HisH and HisF.

It is found in the cytoplasm. It catalyses the reaction 5-[(5-phospho-1-deoxy-D-ribulos-1-ylimino)methylamino]-1-(5-phospho-beta-D-ribosyl)imidazole-4-carboxamide + L-glutamine = D-erythro-1-(imidazol-4-yl)glycerol 3-phosphate + 5-amino-1-(5-phospho-beta-D-ribosyl)imidazole-4-carboxamide + L-glutamate + H(+). It participates in amino-acid biosynthesis; L-histidine biosynthesis; L-histidine from 5-phospho-alpha-D-ribose 1-diphosphate: step 5/9. Functionally, IGPS catalyzes the conversion of PRFAR and glutamine to IGP, AICAR and glutamate. The HisF subunit catalyzes the cyclization activity that produces IGP and AICAR from PRFAR using the ammonia provided by the HisH subunit. In Micrococcus luteus (strain ATCC 4698 / DSM 20030 / JCM 1464 / CCM 169 / CCUG 5858 / IAM 1056 / NBRC 3333 / NCIMB 9278 / NCTC 2665 / VKM Ac-2230) (Micrococcus lysodeikticus), this protein is Imidazole glycerol phosphate synthase subunit HisF.